Here is a 527-residue protein sequence, read N- to C-terminus: MASDFLPVHRALLSVSDKTGLVELARALLAYNIELLSTGGTATIIREAGLPVQDVADLTGFPEMMDGRVKTLHPMVHGGLLGRAGIDDAVMAKHGIAPIDLLILNLYPFEQITAKKDCTLADAVDTIDIGGPAMLRSAAKNFARVAVATSPDQYPDLLAELQAHHGQLSAEKRFALAVAAFNHVAQYDAAISNYLSSVSDMHTTLPLRHEFPAQLNNTFVKMTELRYGENPHQTGAFYRDVHPQPGTLATFQQLQGKTLSYNNLVDADAAWECVRQFEAPACVIVKHANPCGVAVGKACSDAYEEAYATDPTSAFGGIIAVNRMLDVATMQSILDRQFVEVLIAPDYDADALAYATKKANVRVLRIPSTGVMNRYDFKRIGSGLLVQSTDSLNIHSDALKVVTQLAPTDAQQRDLLFAWHVAKYVKSNAIVYAKDNRTIGIGAGQMSRVYSARIAGIKAADAHLAVTGSVMASDAFFPFRDSIDAAAAAGIKAVIQPGGSMRDNEVIAAADEHGIAMVFTGIRHFRH.

One can recognise an MGS-like domain in the interval methionine 1–threonine 149.

This sequence belongs to the PurH family.

It carries out the reaction (6R)-10-formyltetrahydrofolate + 5-amino-1-(5-phospho-beta-D-ribosyl)imidazole-4-carboxamide = 5-formamido-1-(5-phospho-D-ribosyl)imidazole-4-carboxamide + (6S)-5,6,7,8-tetrahydrofolate. The catalysed reaction is IMP + H2O = 5-formamido-1-(5-phospho-D-ribosyl)imidazole-4-carboxamide. It participates in purine metabolism; IMP biosynthesis via de novo pathway; 5-formamido-1-(5-phospho-D-ribosyl)imidazole-4-carboxamide from 5-amino-1-(5-phospho-D-ribosyl)imidazole-4-carboxamide (10-formyl THF route): step 1/1. Its pathway is purine metabolism; IMP biosynthesis via de novo pathway; IMP from 5-formamido-1-(5-phospho-D-ribosyl)imidazole-4-carboxamide: step 1/1. The sequence is that of Bifunctional purine biosynthesis protein PurH from Xylella fastidiosa (strain 9a5c).